The chain runs to 360 residues: Dihydroorotate dehydrogenase (quinone) (360 aa).

FMN contacts are provided by residues alanine 66–lysine 70 and threonine 90. Lysine 70 is a substrate binding site. Substrate is bound at residue asparagine 115–phenylalanine 119. 2 residues coordinate FMN: asparagine 143 and asparagine 176. Asparagine 176 is a substrate binding site. Serine 179 functions as the Nucleophile in the catalytic mechanism. Asparagine 181 is a binding site for substrate. FMN contacts are provided by lysine 212 and threonine 240. Asparagine 241–threonine 242 contributes to the substrate binding site. Residues glycine 264, glycine 293, and tyrosine 314–threonine 315 each bind FMN.

This sequence belongs to the dihydroorotate dehydrogenase family. Type 2 subfamily. Monomer. FMN serves as cofactor.

The protein localises to the cell membrane. It catalyses the reaction (S)-dihydroorotate + a quinone = orotate + a quinol. It participates in pyrimidine metabolism; UMP biosynthesis via de novo pathway; orotate from (S)-dihydroorotate (quinone route): step 1/1. Functionally, catalyzes the conversion of dihydroorotate to orotate with quinone as electron acceptor. This is Dihydroorotate dehydrogenase (quinone) from Mycobacterium marinum (strain ATCC BAA-535 / M).